The chain runs to 102 residues: MICOS complex subunit MIC12 (102 aa).

Residues 4-26 (VLKLTSVTLAASSLAAAGYFYAF) traverse the membrane as a helical segment.

The protein belongs to the MICOS complex subunit Mic12 family. As to quaternary structure, component of the mitochondrial contact site and cristae organizing system (MICOS) complex.

It is found in the mitochondrion inner membrane. Functionally, component of the MICOS complex, a large protein complex of the mitochondrial inner membrane that plays crucial roles in the maintenance of crista junctions, inner membrane architecture, and formation of contact sites to the outer membrane. This Lachancea thermotolerans (strain ATCC 56472 / CBS 6340 / NRRL Y-8284) (Yeast) protein is MICOS complex subunit MIC12 (AIM5).